Here is a 290-residue protein sequence, read N- to C-terminus: HTH-type transcriptional activator RhaR (290 aa).

The HTH araC/xylS-type domain maps to 179-277; that stretch reads DLIMSALQQS…GMTPRDYRQR (99 aa). 2 consecutive DNA-binding regions (H-T-H motif) follow at residues 196-217 and 244-267; these read ADFCHKNQLVERSLKQLFRQQT and ISDIAARCGFEDSNYFSAVFTREA.

Binds DNA as a dimer.

It localises to the cytoplasm. In terms of biological role, activates expression of the rhaSR operon in response to L-rhamnose. The sequence is that of HTH-type transcriptional activator RhaR from Yersinia pestis bv. Antiqua (strain Antiqua).